The following is a 233-amino-acid chain: Adenosylcobinamide-GDP ribazoletransferase (233 aa).

Transmembrane regions (helical) follow at residues 24-44 (LWAL…VLYL), 46-66 (LPLS…LLHL), 96-116 (IAGV…LPLL), 117-137 (PFYA…LALA), 158-178 (QLTL…YIEP), 181-198 (ISSL…RLSL), and 209-229 (IGAV…VVWV).

The protein belongs to the CobS family. Mg(2+) is required as a cofactor.

Its subcellular location is the cell membrane. The catalysed reaction is alpha-ribazole + adenosylcob(III)inamide-GDP = adenosylcob(III)alamin + GMP + H(+). It carries out the reaction alpha-ribazole 5'-phosphate + adenosylcob(III)inamide-GDP = adenosylcob(III)alamin 5'-phosphate + GMP + H(+). The protein operates within cofactor biosynthesis; adenosylcobalamin biosynthesis; adenosylcobalamin from cob(II)yrinate a,c-diamide: step 7/7. Its function is as follows. Joins adenosylcobinamide-GDP and alpha-ribazole to generate adenosylcobalamin (Ado-cobalamin). Also synthesizes adenosylcobalamin 5'-phosphate from adenosylcobinamide-GDP and alpha-ribazole 5'-phosphate. This Thermococcus gammatolerans (strain DSM 15229 / JCM 11827 / EJ3) protein is Adenosylcobinamide-GDP ribazoletransferase.